The chain runs to 147 residues: MDIKNMRNVIVSLSLVFGLLFTVSGIIEIIIGLYSILGFKIELPLFVGDVFGGLALLAVGIAYFLGVKKAVDRDIKAVSYLFTASIIGLGIGVIAFLILISDAIGFLLGFEDWADWGFFNDLTVYLVLGMLAIIPYRIAKIISSSTT.

The next 4 helical transmembrane spans lie at 13-33, 45-65, 80-100, and 116-136; these read LSLV…IIGL, LFVG…AYFL, YLFT…LILI, and WGFF…IIPY.

Its subcellular location is the cell membrane. This is an uncharacterized protein from Methanocaldococcus jannaschii (strain ATCC 43067 / DSM 2661 / JAL-1 / JCM 10045 / NBRC 100440) (Methanococcus jannaschii).